Here is a 530-residue protein sequence, read N- to C-terminus: Polyprotein pp62 (530 aa).

Belongs to the asfivirus polyprotein pp62 family. In terms of assembly, monomer. Predominantly exists as a monomer, with very little dimers. Homodimerization seems to be linked to low pH. As to quaternary structure, homodimer; disulfide-linked. Homotrimer; disulfide-linked. Homohexamer. Post-translationally, monoubiquitinated in vitro by viral UBCv1. Specific enzymatic cleavages in vivo by the viral pS273R protease yield mature proteins.

The protein localises to the host cytoplasm. It is found in the host perinuclear region. The protein resides in the virion. In terms of biological role, essential for the correct assembly and maturation of the core of the virion. Component of the core shell. Binds to phosphatidylserine, which may enable the core shell binding with the inner membrane. Its function is as follows. Component of the core shell. Binds to phosphatidylserine and DNA, which may link the core shell to the inner membrane and to the viral nucleoid. Functionally, component of the core shell. The sequence is that of Polyprotein pp62 from African swine fever virus (strain Badajoz 1971 Vero-adapted) (Ba71V).